The sequence spans 143 residues: Nucleoside diphosphate kinase (143 aa).

ATP-binding residues include lysine 11, phenylalanine 59, arginine 87, threonine 93, arginine 104, and asparagine 114. Histidine 117 serves as the catalytic Pros-phosphohistidine intermediate.

It belongs to the NDK family. As to quaternary structure, homotetramer. Mg(2+) is required as a cofactor.

It localises to the cytoplasm. It carries out the reaction a 2'-deoxyribonucleoside 5'-diphosphate + ATP = a 2'-deoxyribonucleoside 5'-triphosphate + ADP. It catalyses the reaction a ribonucleoside 5'-diphosphate + ATP = a ribonucleoside 5'-triphosphate + ADP. Major role in the synthesis of nucleoside triphosphates other than ATP. The ATP gamma phosphate is transferred to the NDP beta phosphate via a ping-pong mechanism, using a phosphorylated active-site intermediate. The protein is Nucleoside diphosphate kinase of Shewanella amazonensis (strain ATCC BAA-1098 / SB2B).